The chain runs to 156 residues: Ribosomal RNA large subunit methyltransferase H (156 aa).

Residues Leu72, Gly104, and 123–128 (LSEMTL) each bind S-adenosyl-L-methionine.

This sequence belongs to the RNA methyltransferase RlmH family. In terms of assembly, homodimer.

The protein resides in the cytoplasm. It catalyses the reaction pseudouridine(1915) in 23S rRNA + S-adenosyl-L-methionine = N(3)-methylpseudouridine(1915) in 23S rRNA + S-adenosyl-L-homocysteine + H(+). Its function is as follows. Specifically methylates the pseudouridine at position 1915 (m3Psi1915) in 23S rRNA. The chain is Ribosomal RNA large subunit methyltransferase H from Syntrophotalea carbinolica (strain DSM 2380 / NBRC 103641 / GraBd1) (Pelobacter carbinolicus).